The primary structure comprises 283 residues: Pantothenate synthetase (283 aa).

ATP is bound at residue 30-37 (MGNLHAGH). His-37 acts as the Proton donor in catalysis. Gln-61 lines the (R)-pantoate pocket. Gln-61 contributes to the beta-alanine binding site. 149–152 (GEKD) contributes to the ATP binding site. Residue Gln-155 coordinates (R)-pantoate. Residues Val-178 and 186-189 (LSSR) contribute to the ATP site.

Belongs to the pantothenate synthetase family. As to quaternary structure, homodimer.

The protein resides in the cytoplasm. The catalysed reaction is (R)-pantoate + beta-alanine + ATP = (R)-pantothenate + AMP + diphosphate + H(+). The protein operates within cofactor biosynthesis; (R)-pantothenate biosynthesis; (R)-pantothenate from (R)-pantoate and beta-alanine: step 1/1. Functionally, catalyzes the condensation of pantoate with beta-alanine in an ATP-dependent reaction via a pantoyl-adenylate intermediate. The chain is Pantothenate synthetase from Pseudomonas aeruginosa (strain UCBPP-PA14).